The primary structure comprises 214 residues: Thymidylate kinase (214 aa).

13-20 provides a ligand contact to ATP; sequence GPDACGKS.

The protein belongs to the thymidylate kinase family.

It catalyses the reaction dTMP + ATP = dTDP + ADP. In terms of biological role, phosphorylation of dTMP to form dTDP in both de novo and salvage pathways of dTTP synthesis. The polypeptide is Thymidylate kinase (Malacoplasma penetrans (strain HF-2) (Mycoplasma penetrans)).